Here is a 564-residue protein sequence, read N- to C-terminus: Proline--tRNA ligase (564 aa).

It belongs to the class-II aminoacyl-tRNA synthetase family. ProS type 1 subfamily. Homodimer.

The protein localises to the cytoplasm. It catalyses the reaction tRNA(Pro) + L-proline + ATP = L-prolyl-tRNA(Pro) + AMP + diphosphate. Catalyzes the attachment of proline to tRNA(Pro) in a two-step reaction: proline is first activated by ATP to form Pro-AMP and then transferred to the acceptor end of tRNA(Pro). As ProRS can inadvertently accommodate and process non-cognate amino acids such as alanine and cysteine, to avoid such errors it has two additional distinct editing activities against alanine. One activity is designated as 'pretransfer' editing and involves the tRNA(Pro)-independent hydrolysis of activated Ala-AMP. The other activity is designated 'posttransfer' editing and involves deacylation of mischarged Ala-tRNA(Pro). The misacylated Cys-tRNA(Pro) is not edited by ProRS. The polypeptide is Proline--tRNA ligase (Bacillus subtilis (strain 168)).